Reading from the N-terminus, the 525-residue chain is M-phase inducer phosphatase 1 (525 aa).

Residues 1–42 (MELGPEPPHRRRLLFTCSPTPAPQPTGKVQFGASRAGGLSPV) form a disordered region. Residues 74-84 (MGSSESTDSGF) carry the Phosphodegron motif. Position 76 is a phosphoserine; by CHEK1 (Ser-76). Phosphoserine; by NEK11 occurs at positions 79, 82, and 88. Ser-124 bears the Phosphoserine; by CHEK1 and CHEK2 mark. Residues 141 to 143 (KEN) carry the KEN box motif. Residue Ser-178 is modified to Phosphoserine; by CHEK1. The disordered stretch occupies residues 260 to 318 (FDSPSPCSSTSSCSTRAVKRADRSHEESPRGTKRRKSSEASPVKADVPEPTQLPHQSLS). Positions 262–274 (SPSPCSSTSSCST) are enriched in low complexity. The segment covering 278–289 (KRADRSHEESPR) has biased composition (basic and acidic residues). Ser-283 and Ser-296 each carry phosphoserine; by CHEK1 and CHEK2. Positions 377-483 (LIKEFVIIDC…FFLKCQSHCE (107 aa)) constitute a Rhodanese domain. The active site involves Cys-432. Phosphothreonine; by CHEK1 is present on Thr-508. Phosphoserine; by PLK3 is present on residues Ser-514 and Ser-520.

This sequence belongs to the MPI phosphatase family. In terms of assembly, interacts with CCNB1/cyclin B1. Interacts with YWHAE/14-3-3 epsilon when phosphorylated. Interacts with CUL1 specifically when CUL1 is neddylated and active. Interacts with BTRC/BTRCP1 and FBXW11/BTRCP2. Interactions with CUL1, BTRC and FBXW11 are enhanced upon DNA damage. Interacts with CHEK2; mediates CDC25A phosphorylation and degradation in response to infrared-induced DNA damages. Interacts with HSP90AB1; prevents heat shock-mediated CDC25A degradation and contributes to cell cycle progression. In terms of processing, phosphorylated by CHEK1 on Ser-76, Ser-124, Ser-178, Ser-283, Ser-296 and Thr-508 during checkpoint mediated cell cycle arrest. Also phosphorylated by CHEK2 on Ser-124, Ser-283, and Ser-296 during checkpoint mediated cell cycle arrest. Phosphorylation on Ser-178 and Thr-508 creates binding sites for YWHAE/14-3-3 epsilon which inhibits CDC25A. Phosphorylation on Ser-76, Ser-124, Ser-178, Ser-283 and Ser-296 may also promote ubiquitin-dependent proteolysis of CDC25A by the SCF complex. Phosphorylation of CDC25A at Ser-76 by CHEK1 primes it for subsequent phosphorylation at Ser-79, Ser-82 and Ser-88 by NEK11. Phosphorylation by NEK11 is required for BTRC-mediated polyubiquitination and degradation. Phosphorylation by PIM1 leads to an increase in phosphatase activity. Phosphorylated by PLK3 following DNA damage, leading to promote its ubiquitination and degradation. Ubiquitinated by the anaphase promoting complex/cyclosome (APC/C) ubiquitin ligase complex that contains FZR1/CDH1 during G1 phase leading to its degradation by the proteasome. Ubiquitinated by a SCF complex containing BTRC and FBXW11 during S phase leading to its degradation by the proteasome. Deubiquitination by USP17L2/DUB3 leads to its stabilization.

It carries out the reaction O-phospho-L-tyrosyl-[protein] + H2O = L-tyrosyl-[protein] + phosphate. Its activity is regulated as follows. Stimulated by B-type cyclins. Stimulated by PIM1-mediated phosphorylation. Functionally, tyrosine protein phosphatase which functions as a dosage-dependent inducer of mitotic progression. Directly dephosphorylates CDK1 and stimulates its kinase activity. Also dephosphorylates CDK2 in complex with cyclin-E, in vitro. In Rattus norvegicus (Rat), this protein is M-phase inducer phosphatase 1 (Cdc25a).